Here is a 471-residue protein sequence, read N- to C-terminus: NALCN channel auxiliary factor 2 (471 aa).

The chain crosses the membrane as a helical span at residues 47 to 67; that stretch reads LASLLFFTVLLADHLWLCAGA. A disordered region spans residues 76 to 115; the sequence is SAMRPPWGAGRERQPVPPRAVLPPPPPSPGEPSASSGTCG. Positions 90-105 are enriched in pro residues; that stretch reads PVPPRAVLPPPPPSPG. A glycan (N-linked (GlcNAc...) asparagine) is linked at Asn-120. Disordered stretches follow at residues 158–178 and 399–424; these read EPTT…APEF and HYHP…GGSR. Over residues 161-171 the composition is skewed to pro residues; it reads TPAPPLRPPDS. A helical membrane pass occupies residues 432-452; that stretch reads LCVLVLILLHTVVSFSSSQSG.

This sequence belongs to the NALF family.

The protein resides in the membrane. Probable component of the NALCN channel complex, a channel that regulates the resting membrane potential and controls neuronal excitability. This is NALCN channel auxiliary factor 2 (Nalf2) from Mus musculus (Mouse).